The chain runs to 448 residues: Ribonuclease J (448 aa).

6 residues coordinate Zn(2+): H81, H83, D85, H86, H151, and D173. 383–387 contributes to the substrate binding site; the sequence is HVSGH. H409 serves as a coordination point for Zn(2+).

The protein belongs to the metallo-beta-lactamase superfamily. RNA-metabolizing metallo-beta-lactamase-like family. Archaeal RNase J subfamily. In terms of assembly, forms homodimers on heating to 60 degrees Celsius which may be the active form. Zn(2+) is required as a cofactor.

The protein resides in the cytoplasm. Inhibited by imidazole. In terms of biological role, a 5'-3' exoribonuclease with a strong reference for 5'-monophosphorylated RNA and no endoribonuclease activty. Also has robust 5'-'3 nuclease activity on single-stranded DNA (exodeoxyribonuclease, exoDNase). May be involved in RNA degradation. The polypeptide is Ribonuclease J (Methanocaldococcus jannaschii (strain ATCC 43067 / DSM 2661 / JAL-1 / JCM 10045 / NBRC 100440) (Methanococcus jannaschii)).